Reading from the N-terminus, the 302-residue chain is tRNA-cytidine(32) 2-sulfurtransferase (302 aa).

The PP-loop motif signature appears at 43-48 (SGGKDS). Positions 118, 121, and 209 each coordinate [4Fe-4S] cluster.

Belongs to the TtcA family. As to quaternary structure, homodimer. It depends on Mg(2+) as a cofactor. Requires [4Fe-4S] cluster as cofactor.

Its subcellular location is the cytoplasm. The enzyme catalyses cytidine(32) in tRNA + S-sulfanyl-L-cysteinyl-[cysteine desulfurase] + AH2 + ATP = 2-thiocytidine(32) in tRNA + L-cysteinyl-[cysteine desulfurase] + A + AMP + diphosphate + H(+). It functions in the pathway tRNA modification. Its function is as follows. Catalyzes the ATP-dependent 2-thiolation of cytidine in position 32 of tRNA, to form 2-thiocytidine (s(2)C32). The sulfur atoms are provided by the cysteine/cysteine desulfurase (IscS) system. The polypeptide is tRNA-cytidine(32) 2-sulfurtransferase (Polynucleobacter necessarius subsp. necessarius (strain STIR1)).